The following is a 480-amino-acid chain: Cobyric acid synthase (480 aa).

Positions 246-434 (KILIAVPILP…VHGLFSELAQ (189 aa)) constitute a GATase cobBQ-type domain. The Nucleophile role is filled by cysteine 328. The active site involves histidine 426.

This sequence belongs to the CobB/CobQ family. CobQ subfamily.

It functions in the pathway cofactor biosynthesis; adenosylcobalamin biosynthesis. Catalyzes amidations at positions B, D, E, and G on adenosylcobyrinic A,C-diamide. NH(2) groups are provided by glutamine, and one molecule of ATP is hydrogenolyzed for each amidation. The sequence is that of Cobyric acid synthase from Methylocella silvestris (strain DSM 15510 / CIP 108128 / LMG 27833 / NCIMB 13906 / BL2).